Here is a 382-residue protein sequence, read N- to C-terminus: Na(+)/H(+) antiporter NhaA (382 aa).

The next 10 helical transmembrane spans lie at 5-25 (INLL…ALAW), 42-62 (FGGV…FFGI), 88-108 (LATL…NAVI), 116-136 (GWGI…RLVF), 145-165 (FLLL…AVFY), 169-189 (VHPT…AAYI), 261-281 (IVVD…RFSS), 282-302 (VGTA…AGIL), 327-347 (TGLV…VAFV), and 353-373 (GAAK…VALG).

The protein belongs to the NhaA Na(+)/H(+) (TC 2.A.33) antiporter family.

The protein resides in the cell inner membrane. The enzyme catalyses Na(+)(in) + 2 H(+)(out) = Na(+)(out) + 2 H(+)(in). In terms of biological role, na(+)/H(+) antiporter that extrudes sodium in exchange for external protons. The chain is Na(+)/H(+) antiporter NhaA from Geobacter metallireducens (strain ATCC 53774 / DSM 7210 / GS-15).